The sequence spans 507 residues: tRNA(Ile)-lysidine synthase (507 aa).

24–29 (SGGGDS) is a binding site for ATP. Positions 370–500 (PPEEAHMAEA…KLLRDFFARL (131 aa)) constitute a CMP/dCMP-type deaminase domain. Residues His-420, Cys-445, and Cys-448 each coordinate Zn(2+).

The protein belongs to the tRNA(Ile)-lysidine synthase family.

It is found in the cytoplasm. It catalyses the reaction cytidine(34) in tRNA(Ile2) + L-lysine + ATP = lysidine(34) in tRNA(Ile2) + AMP + diphosphate + H(+). Functionally, ligates lysine onto the cytidine present at position 34 of the AUA codon-specific tRNA(Ile) that contains the anticodon CAU, in an ATP-dependent manner. Cytidine is converted to lysidine, thus changing the amino acid specificity of the tRNA from methionine to isoleucine. The protein is tRNA(Ile)-lysidine synthase (tilS) of Thermus thermophilus (strain ATCC BAA-163 / DSM 7039 / HB27).